A 290-amino-acid chain; its full sequence is ADP-dependent (S)-NAD(P)H-hydrate dehydratase (290 aa).

One can recognise a YjeF C-terminal domain in the interval 5–278 (NQTLLEKVII…RYLPKIMKII (274 aa)). (6S)-NADPHX-binding residues include A40, G103, and H152. G218 contacts AMP. D219 serves as a coordination point for (6S)-NADPHX.

The protein belongs to the NnrD/CARKD family. As to quaternary structure, homotetramer. Mg(2+) serves as cofactor.

It carries out the reaction (6S)-NADHX + ADP = AMP + phosphate + NADH + H(+). It catalyses the reaction (6S)-NADPHX + ADP = AMP + phosphate + NADPH + H(+). Functionally, catalyzes the dehydration of the S-form of NAD(P)HX at the expense of ADP, which is converted to AMP. Together with NAD(P)HX epimerase, which catalyzes the epimerization of the S- and R-forms, the enzyme allows the repair of both epimers of NAD(P)HX, a damaged form of NAD(P)H that is a result of enzymatic or heat-dependent hydration. The chain is ADP-dependent (S)-NAD(P)H-hydrate dehydratase from Streptococcus pneumoniae (strain ATCC BAA-255 / R6).